The sequence spans 70 residues: Guanine nucleotide-binding protein G(I)/G(S)/G(O) subunit gamma-8 (70 aa).

The residue at position 67 (Cys67) is a Cysteine methyl ester. A lipid anchor (S-geranylgeranyl cysteine) is attached at Cys67. Positions Thr68–Leu70 are cleaved as a propeptide — removed in mature form.

This sequence belongs to the G protein gamma family. In terms of assembly, g proteins are composed of 3 units, alpha, beta and gamma. As to expression, detected in the olfactory epithelium, the vomeronasal epithelium and, to a lesser extent, the olfactory bulb.

It localises to the cell membrane. Functionally, guanine nucleotide-binding proteins (G proteins) are involved as a modulator or transducer in various transmembrane signaling systems. The beta and gamma chains are required for the GTPase activity, for replacement of GDP by GTP, and for G protein-effector interaction. This subunit may have a very specific role in the development and turnover of olfactory and vomeronasal neurons. The sequence is that of Guanine nucleotide-binding protein G(I)/G(S)/G(O) subunit gamma-8 (Gng8) from Rattus norvegicus (Rat).